The chain runs to 601 residues: Testis-specific gene 10 protein (601 aa).

Basic residues predominate over residues 1 to 10; sequence MMRSRSKSPR. Disordered regions lie at residues 1–20 and 563–588; these read MMRS…RGAN and VSST…DRGL. Positions 459 to 592 are interaction with HIF1A; the sequence is QMTNERISMQ…SPDRGLDRSL (134 aa). A compositionally biased stretch (polar residues) spans 563–573; sequence VSSTMKPNTKC. Residues 574–588 are compositionally biased toward basic and acidic residues; sequence HSPERAHHRSPDRGL. A Phosphoserine modification is found at Ser591.

This sequence belongs to the CEP135/TSGA10 family. Interacts with HIF1A. Post-translationally, processed into N-terminal 27-kDa and C-terminal 55-kDa fragments.

Its subcellular location is the cytoplasm. It is found in the cytoskeleton. It localises to the microtubule organizing center. The protein resides in the centrosome. The protein localises to the centriole. In terms of biological role, plays a role in spermatogenesis. When overexpressed, prevents nuclear localization of HIF1A. The polypeptide is Testis-specific gene 10 protein (TSGA10) (Macaca fascicularis (Crab-eating macaque)).